Here is a 111-residue protein sequence, read N- to C-terminus: Small ribosomal subunit protein mS38 (111 aa).

Residues 82 to 99 (RKRKKKMKKHKLRKRRKR) are compositionally biased toward basic residues. The disordered stretch occupies residues 82–111 (RKRKKKMKKHKLRKRRKREKAERRKLSQGR). The span at 100-111 (EKAERRKLSQGR) shows a compositional bias: basic and acidic residues.

Belongs to the mitochondrion-specific ribosomal protein mS38 family. In terms of assembly, component of the mitochondrial small ribosomal subunit (mt-SSU). Mature yeast 74S mitochondrial ribosomes consist of a small (37S) and a large (54S) subunit. The 37S small subunit contains a 15S ribosomal RNA (15S mt-rRNA) and 34 different proteins. The 54S large subunit contains a 21S rRNA (21S mt-rRNA) and 46 different proteins.

The protein resides in the mitochondrion. It is found in the mitochondrion inner membrane. Functionally, component of the mitochondrial ribosome (mitoribosome), a dedicated translation machinery responsible for the synthesis of mitochondrial genome-encoded proteins, including at least some of the essential transmembrane subunits of the mitochondrial respiratory chain. The mitoribosomes are attached to the mitochondrial inner membrane and translation products are cotranslationally integrated into the membrane. mS38 is also involved in the splicing of the COX1 mRNA. This chain is Small ribosomal subunit protein mS38 (QRI5), found in Saccharomyces cerevisiae (strain ATCC 204508 / S288c) (Baker's yeast).